Consider the following 210-residue polypeptide: NAD(P)H-quinone oxidoreductase subunit I (210 aa).

4Fe-4S ferredoxin-type domains lie at 54–83 and 94–123; these read GRIHFEFDKCIACEICVRVCPIDLPVVDWV and YSYSIDFGVCIFCANCVEFCPTNCLSVTED. 8 residues coordinate [4Fe-4S] cluster: Cys63, Cys66, Cys69, Cys73, Cys103, Cys106, Cys109, and Cys113.

This sequence belongs to the complex I 23 kDa subunit family. As to quaternary structure, NDH-1 is composed of at least 11 different subunits. [4Fe-4S] cluster is required as a cofactor.

It localises to the cellular thylakoid membrane. The enzyme catalyses a plastoquinone + NADH + (n+1) H(+)(in) = a plastoquinol + NAD(+) + n H(+)(out). It catalyses the reaction a plastoquinone + NADPH + (n+1) H(+)(in) = a plastoquinol + NADP(+) + n H(+)(out). NDH-1 shuttles electrons from an unknown electron donor, via FMN and iron-sulfur (Fe-S) centers, to quinones in the respiratory and/or the photosynthetic chain. The immediate electron acceptor for the enzyme in this species is believed to be plastoquinone. Couples the redox reaction to proton translocation, and thus conserves the redox energy in a proton gradient. The sequence is that of NAD(P)H-quinone oxidoreductase subunit I from Synechococcus sp. (strain JA-3-3Ab) (Cyanobacteria bacterium Yellowstone A-Prime).